We begin with the raw amino-acid sequence, 368 residues long: MSLYPIYNFSAGPAVLPEAVLRTAQQEMSDYNGTGFSVMEMSHRSEMFLSILHHAEQDLRQLLKVPDNYKILFLQGGATTQFNMAAMNLAHGFRTADAVVTGNWSRIAYEQMSRLTDTEIRLAAHGGEQFDYLDLPPVETWDVAPDSAFVHFAVNETVNGLQYREVPRLSDGMPPLVCDMSSEILSREFDVADYGLIYAGAQKNIGPAGVTVVIVREDLLERCPNDIPDVFNYRSHLNRDGMYNTPSTYAIYMSGLVFRWLQAQGGVKKIEAVNRLKAQTLYETIDGSGGFYINDIHPDARSKMNVVFKTASEDLDRRFVLEAELQGLCLLKGYKSVGGMRASIYNAMPLEGVRALADFMRDFQRRYG.

Residue arginine 44 participates in L-glutamate binding. Pyridoxal 5'-phosphate-binding positions include 78-79 (AT), tryptophan 104, threonine 157, aspartate 179, and glutamine 202. Lysine 203 is modified (N6-(pyridoxal phosphate)lysine). 244–245 (NT) serves as a coordination point for pyridoxal 5'-phosphate.

The protein belongs to the class-V pyridoxal-phosphate-dependent aminotransferase family. SerC subfamily. As to quaternary structure, homodimer. It depends on pyridoxal 5'-phosphate as a cofactor.

The protein resides in the cytoplasm. The enzyme catalyses O-phospho-L-serine + 2-oxoglutarate = 3-phosphooxypyruvate + L-glutamate. It catalyses the reaction 4-(phosphooxy)-L-threonine + 2-oxoglutarate = (R)-3-hydroxy-2-oxo-4-phosphooxybutanoate + L-glutamate. The protein operates within amino-acid biosynthesis; L-serine biosynthesis; L-serine from 3-phospho-D-glycerate: step 2/3. Its pathway is cofactor biosynthesis; pyridoxine 5'-phosphate biosynthesis; pyridoxine 5'-phosphate from D-erythrose 4-phosphate: step 3/5. Its function is as follows. Catalyzes the reversible conversion of 3-phosphohydroxypyruvate to phosphoserine and of 3-hydroxy-2-oxo-4-phosphonooxybutanoate to phosphohydroxythreonine. This Neisseria gonorrhoeae (strain ATCC 700825 / FA 1090) protein is Phosphoserine aminotransferase.